We begin with the raw amino-acid sequence, 541 residues long: MNNQKFFLIIAIFLSIFLLWDKWEITHTIDKNNNLISQTKIKNTSTINNSLTNQNLDIPSVTNRNNKLDLPNTDTKNQIPFTTVKTDLLTLEISHKGGTIQNAWLNDYPIEIDSEQKFQLLSDRTGKIFQAQSGLLPQGKMPTHHSIFSSKNIYYQMDGNNLVVPFTWKSENGIIVNKRYHFNKNSYVVGIDYQITNTTNNTLHITSYTQLIRNIPDQDNMIMPTYTGGARFNDQDVYEKIEFEDFDDQPKTSYKGGWMAMIEHYFFVAVIPNLNQIHTYSSKIINDKYLLTVVNPELSIAPGATKTIINSNLYIGPKEQSHIDNVAPGLDKTVDYGILFIIAKPLSELLNWIYSIIHSWGYSIIILTLLIKLAFYKLSEKSYRSMAGMRQLAPRLKKLKETYGDNKQKLGKKTMELYKKEKINPASGCLPILVQIPVFISLYWVLLEMVELRQAPFWYLTDLSAPDPYYILPLIMGISMFIQQKLNPPPPDPIQAKIMMALPFVFTIFFLWFPSGLVLYWMINNILSITQQWVINKRINN.

Helical transmembrane passes span 6 to 26 (FFLI…WEIT), 356 to 376 (IIHS…LAFY), 430 to 450 (LPIL…LEMV), 463 to 483 (LSAP…MFIQ), and 498 to 518 (IMMA…SGLV).

This sequence belongs to the OXA1/ALB3/YidC family. Type 1 subfamily. Interacts with the Sec translocase complex via SecD. Specifically interacts with transmembrane segments of nascent integral membrane proteins during membrane integration.

It is found in the cell inner membrane. Required for the insertion and/or proper folding and/or complex formation of integral membrane proteins into the membrane. Involved in integration of membrane proteins that insert both dependently and independently of the Sec translocase complex, as well as at least some lipoproteins. Aids folding of multispanning membrane proteins. The polypeptide is Membrane protein insertase YidC (Vesicomyosocius okutanii subsp. Calyptogena okutanii (strain HA)).